A 232-amino-acid chain; its full sequence is Probable transglycosylase SceD (232 aa).

A signal peptide spans 1 to 25 (MKKLLVASSASAALFAVGVGANAHA). Residues 84 to 154 (DSSAQQAPAQ…QQSADSGSNV (71 aa)) are disordered. Residues 87–148 (AQQAPAQSTT…QTQQPAQQSA (62 aa)) show a composition bias toward low complexity.

This sequence belongs to the transglycosylase family. SceD subfamily.

It localises to the secreted. Functionally, is able to cleave peptidoglycan and affects clumping and separation of bacterial cells. The sequence is that of Probable transglycosylase SceD (sceD) from Staphylococcus carnosus (strain TM300).